A 186-amino-acid polypeptide reads, in one-letter code: Acireductone dioxygenase (186 aa).

Fe(2+)-binding residues include histidine 96, histidine 98, glutamate 102, and histidine 140. Residues histidine 96, histidine 98, glutamate 102, and histidine 140 each coordinate Ni(2+).

Belongs to the acireductone dioxygenase (ARD) family. Monomer. It depends on Fe(2+) as a cofactor. Ni(2+) is required as a cofactor.

It catalyses the reaction 1,2-dihydroxy-5-(methylsulfanyl)pent-1-en-3-one + O2 = 3-(methylsulfanyl)propanoate + CO + formate + 2 H(+). It carries out the reaction 1,2-dihydroxy-5-(methylsulfanyl)pent-1-en-3-one + O2 = 4-methylsulfanyl-2-oxobutanoate + formate + 2 H(+). It functions in the pathway amino-acid biosynthesis; L-methionine biosynthesis via salvage pathway; L-methionine from S-methyl-5-thio-alpha-D-ribose 1-phosphate: step 5/6. Functionally, catalyzes 2 different reactions between oxygen and the acireductone 1,2-dihydroxy-3-keto-5-methylthiopentene (DHK-MTPene) depending upon the metal bound in the active site. Fe-containing acireductone dioxygenase (Fe-ARD) produces formate and 2-keto-4-methylthiobutyrate (KMTB), the alpha-ketoacid precursor of methionine in the methionine recycle pathway. Ni-containing acireductone dioxygenase (Ni-ARD) produces methylthiopropionate, carbon monoxide and formate, and does not lie on the methionine recycle pathway. This Methylococcus capsulatus (strain ATCC 33009 / NCIMB 11132 / Bath) protein is Acireductone dioxygenase.